Consider the following 154-residue polypeptide: Ribosome maturation factor RimP (154 aa).

It belongs to the RimP family.

The protein localises to the cytoplasm. Required for maturation of 30S ribosomal subunits. The protein is Ribosome maturation factor RimP of Prochlorococcus marinus (strain MIT 9313).